The sequence spans 239 residues: MLEILYQDGFLVAVNKPAGMLVHRSWLDPHETQFVMQTLRDQIGQHVFPIHRLDRPTSGVLLFALSSEIANLMCEQFEQKYVQKSYLAVVRGYLQGKERIDYPLKIQLDKIADKFSQEDKEPQEAITDYEGLKIVEMPYPAGRYQTARYSLVKLIPHTGRKHXLRXHMKHVFHPIXGDTQYGDLHQNRALMSHLGCSRLFLHSDSLSFIHPITKEQITITAGLDEQWQQLMNQFGWENV.

The active site involves D54.

This sequence belongs to the pseudouridine synthase RluA family.

The enzyme catalyses uridine(65) in tRNA = pseudouridine(65) in tRNA. Functionally, responsible for synthesis of pseudouridine from uracil-65 in transfer RNAs. The polypeptide is tRNA pseudouridine synthase C (truC) (Haemophilus influenzae (strain ATCC 51907 / DSM 11121 / KW20 / Rd)).